The primary structure comprises 585 residues: A-type ATP synthase subunit A (585 aa).

231-238 contacts ATP; the sequence is GPFGSGKT.

This sequence belongs to the ATPase alpha/beta chains family. In terms of assembly, has multiple subunits with at least A(3), B(3), C, D, E, F, H, I and proteolipid K(x).

The protein localises to the cell membrane. It catalyses the reaction ATP + H2O + 4 H(+)(in) = ADP + phosphate + 5 H(+)(out). Its function is as follows. Component of the A-type ATP synthase that produces ATP from ADP in the presence of a proton gradient across the membrane. The A chain is the catalytic subunit. This is A-type ATP synthase subunit A from Thermococcus onnurineus (strain NA1).